The sequence spans 369 residues: 2-aminoethylphosphonate--pyruvate transaminase (369 aa).

K193 is subject to N6-(pyridoxal phosphate)lysine.

Belongs to the class-V pyridoxal-phosphate-dependent aminotransferase family. PhnW subfamily. As to quaternary structure, homodimer. It depends on pyridoxal 5'-phosphate as a cofactor.

It carries out the reaction (2-aminoethyl)phosphonate + pyruvate = phosphonoacetaldehyde + L-alanine. In terms of biological role, involved in phosphonate degradation. In Burkholderia pseudomallei (strain K96243), this protein is 2-aminoethylphosphonate--pyruvate transaminase.